Reading from the N-terminus, the 525-residue chain is ATP synthase subunit alpha (525 aa).

An ATP-binding site is contributed by 171–178 (GDRQTGKS).

This sequence belongs to the ATPase alpha/beta chains family. In terms of assembly, F-type ATPases have 2 components, CF(1) - the catalytic core - and CF(0) - the membrane proton channel. CF(1) has five subunits: alpha(3), beta(3), gamma(1), delta(1), epsilon(1). CF(0) has three main subunits: a(1), b(2) and c(9-12). The alpha and beta chains form an alternating ring which encloses part of the gamma chain. CF(1) is attached to CF(0) by a central stalk formed by the gamma and epsilon chains, while a peripheral stalk is formed by the delta and b chains.

It localises to the cell inner membrane. It carries out the reaction ATP + H2O + 4 H(+)(in) = ADP + phosphate + 5 H(+)(out). Its function is as follows. Produces ATP from ADP in the presence of a proton gradient across the membrane. The alpha chain is a regulatory subunit. The protein is ATP synthase subunit alpha of Flavobacterium johnsoniae (strain ATCC 17061 / DSM 2064 / JCM 8514 / BCRC 14874 / CCUG 350202 / NBRC 14942 / NCIMB 11054 / UW101) (Cytophaga johnsonae).